The following is a 588-amino-acid chain: Transcription factor 7-like 1 (588 aa).

Residues 1 to 31 are compositionally biased toward gly residues; the sequence is MPQLGGGGGGGGGGSGGGGGSSAGAAGGGDD. The segment at 1–74 is CTNNB1-binding; sequence MPQLGGGGGG…VKSSLVNESE (74 aa). Disordered regions lie at residues 1 to 101, 203 to 234, and 409 to 506; these read MPQL…PRDY, SPGS…SPYY, and LYPT…LSLT. Residues 67–81 show a composition bias toward low complexity; that stretch reads SSLVNESENQSSSSD. A compositionally biased stretch (basic and acidic residues) spans 83 to 101; sequence EAERRPQPVRDTFQKPRDY. Positions 346–414 form a DNA-binding region, HMG box; the sequence is VKKPLNAFML…LHSQLYPTWS (69 aa). Positions 421–427 match the Nuclear localization signal motif; the sequence is KKKKRKR. Low complexity-rich tracts occupy residues 431–441 and 478–497; these read LSQTQSQQQVQ and SPAT…ATHS.

The protein belongs to the TCF/LEF family. Binds the armadillo repeat of CTNNB1 and forms a stable complex. Interacts with DAZAP2. Detected in hair follicles and skin keratinocytes, and at lower levels in stomach epithelium.

The protein localises to the nucleus. In terms of biological role, participates in the Wnt signaling pathway. Binds to DNA and acts as a repressor in the absence of CTNNB1, and as an activator in its presence. Necessary for the terminal differentiation of epidermal cells, the formation of keratohyalin granules and the development of the barrier function of the epidermis. Down-regulates NQO1, leading to increased mitomycin c resistance. This Homo sapiens (Human) protein is Transcription factor 7-like 1 (TCF7L1).